The primary structure comprises 193 residues: dTTP/UTP pyrophosphatase (193 aa).

Residue aspartate 70 is the Proton acceptor of the active site.

Belongs to the Maf family. YhdE subfamily. It depends on a divalent metal cation as a cofactor.

It is found in the cytoplasm. The catalysed reaction is dTTP + H2O = dTMP + diphosphate + H(+). It catalyses the reaction UTP + H2O = UMP + diphosphate + H(+). Functionally, nucleoside triphosphate pyrophosphatase that hydrolyzes dTTP and UTP. May have a dual role in cell division arrest and in preventing the incorporation of modified nucleotides into cellular nucleic acids. In Alcanivorax borkumensis (strain ATCC 700651 / DSM 11573 / NCIMB 13689 / SK2), this protein is dTTP/UTP pyrophosphatase.